The chain runs to 221 residues: Urease accessory protein UreF (221 aa).

It belongs to the UreF family. In terms of assembly, ureD, UreF and UreG form a complex that acts as a GTP-hydrolysis-dependent molecular chaperone, activating the urease apoprotein by helping to assemble the nickel containing metallocenter of UreC. The UreE protein probably delivers the nickel.

The protein resides in the cytoplasm. In terms of biological role, required for maturation of urease via the functional incorporation of the urease nickel metallocenter. This is Urease accessory protein UreF from Aliivibrio fischeri (strain MJ11) (Vibrio fischeri).